The following is a 339-amino-acid chain: DNA-directed RNA polymerase subunit alpha (339 aa).

The tract at residues 1 to 235 (MTIQKNWQEL…DQLNVFVNFE (235 aa)) is alpha N-terminal domain (alpha-NTD). Residues 251–339 (FNPAFLKKVD…ELAKRFEDHY (89 aa)) are alpha C-terminal domain (alpha-CTD).

Belongs to the RNA polymerase alpha chain family. As to quaternary structure, homodimer. The RNAP catalytic core consists of 2 alpha, 1 beta, 1 beta' and 1 omega subunit. When a sigma factor is associated with the core the holoenzyme is formed, which can initiate transcription.

The catalysed reaction is RNA(n) + a ribonucleoside 5'-triphosphate = RNA(n+1) + diphosphate. DNA-dependent RNA polymerase catalyzes the transcription of DNA into RNA using the four ribonucleoside triphosphates as substrates. This chain is DNA-directed RNA polymerase subunit alpha, found in Rhodopseudomonas palustris (strain HaA2).